Reading from the N-terminus, the 603-residue chain is Serine/threonine-protein kinase PLK1 (603 aa).

Residues 1–15 are compositionally biased toward low complexity; the sequence is MNAAAKAGKLARAPA. A disordered region spans residues 1–32; that stretch reads MNAAAKAGKLARAPADLGKGGVPGDAAPGAPG. A Glycyl lysine isopeptide (Lys-Gly) (interchain with G-Cter in ubiquitin) cross-link involves residue K19. The Protein kinase domain maps to 53-305; sequence YVRGRFLGKG…IHELLNDEFF (253 aa). ATP-binding positions include 59–67 and K82; that span reads LGKGGFAKC. At S103 the chain carries Phosphoserine. E131 provides a ligand contact to ATP. Position 137 is a phosphoserine (S137). The active-site Proton acceptor is D176. ATP-binding positions include 178-181 and D194; that span reads KLGN. The activation loop stretch occupies residues 194-221; the sequence is DFGLATKVEYEGERKKTLCGTPNYIAPE. T210 is modified (phosphothreonine; by AURKA). At T214 the chain carries Phosphothreonine. Phosphoserine; by autocatalysis is present on residues S269 and S335. The D-box that targets the protein for proteasomal degradation in anaphase signature appears at 337–340; the sequence is RKPL. K338 is covalently cross-linked (Glycyl lysine isopeptide (Lys-Gly) (interchain with G-Cter in SUMO2)). A disordered region spans residues 338–361; that stretch reads KPLTVLNKGVENPLPDRPREKEEP. Residues 351–361 are compositionally biased toward basic and acidic residues; that stretch reads LPDRPREKEEP. 2 positions are modified to phosphoserine: S375 and S450. In terms of domain architecture, POLO box 1 spans 410–488; that stretch reads WVSKWVDYSD…LNYFRNYMSE (79 aa). A Glycyl lysine isopeptide (Lys-Gly) (interchain with G-Cter in ubiquitin) cross-link involves residue K492. Positions 493-507 are linker; the sequence is AGANITPREGDELAR. Phosphothreonine is present on T498. The POLO box 2 domain occupies 510–592; that stretch reads YLRTWFRTRS…ARTMVDKLLS (83 aa). The tract at residues 538–540 is important for interaction with phosphorylated proteins; sequence HTK.

The protein belongs to the protein kinase superfamily. Ser/Thr protein kinase family. CDC5/Polo subfamily. As to quaternary structure, interacts with CEP170 and EVI5. Interacts and phosphorylates ERCC6L. Interacts with FAM29A. Interacts with SLX4/BTBD12 and TTDN1. Interacts with BUB1B. Interacts (via POLO-box domain) with the phosphorylated form of BUB1, CENPU and CDC25C. Interacts with isoform 3 of SGO1. Interacts with BORA, KIF2A and AURKA. Interacts with TOPORS and CYLD. Interacts with ECT2; the interaction is stimulated upon phosphorylation of ECT2 on 'Thr-444'. Interacts with PRC1. Interacts with KIF20A/MKLP2 (when phosphorylated), leading to the recruitment at the central spindle. Interacts (via POLO box domains) with PPP1R12A/MYPT1 (when previously phosphorylated by CDK1). Part of an astrin (SPAG5)-kinastrin (SKAP) complex containing KNSTRN, SPAG5, PLK1, DYNLL1 and SGO2. Interacts with BIRC6/bruce. Interacts with CDK1-phosphorylated FRY; this interaction occurs in mitotic cells, but not in interphase cells. FRY interaction facilitates AURKA-mediated PLK1 phosphorylation. Interacts with CDK1-phosphorylated DCTN6 during mitotic prometaphase; the interaction facilitates recruitment to kinetochores. Interacts with CEP68; the interaction phosphorylates CEP68. Interacts (via POLO-box domain) with DCTN1. Interacts with CEP20 in later G1, S, G2 and M phases of the cell cycle; this interaction recruits PLK1 to centrosomes, a step required for S phase progression. Interacts with HSF1; this interaction increases upon heat shock but does not modulate neither HSF1 homotrimerization nor DNA-binding activities. Interacts with HNRNPU; this interaction induces phosphorylation of HNRNPU in mitosis. Interacts (via its N-terminus) with RIOK2. Interacts with KLHL22. Interacts (via POLO box domains) with NEDD9/HEF1 (via C-terminus). Interacts (via RVxF motif) with FIRRM; regulates PLK1 kinase activity. Interacts with SKA3; the interaction promotes the stability of PLK1. Interacts with the MTMR3:MTMR4 heterooligomer; brings CEP55 and PLK1 together during early mitosis, regulating the phosphorylation of CEP55 by PLK1 and its recruitment to the midbody where it can mediate cell abscission. Catalytic activity is enhanced by phosphorylation of Thr-210. Phosphorylation at Thr-210 is first detected on centrosomes in the G2 phase of the cell cycle, peaks in prometaphase and gradually disappears from centrosomes during anaphase. Dephosphorylation at Thr-210 at centrosomes is probably mediated by protein phosphatase 1C (PP1C), via interaction with PPP1R12A/MYPT1. Autophosphorylation and phosphorylation of Ser-137 may not be significant for the activation of PLK1 during mitosis, but may enhance catalytic activity during recovery after DNA damage checkpoint. Phosphorylated in vitro by STK10. Post-translationally, ubiquitinated by the anaphase promoting complex/cyclosome (APC/C) in anaphase and following DNA damage, leading to its degradation by the proteasome. Ubiquitination is mediated via its interaction with FZR1/CDH1. Ubiquitination and subsequent degradation prevents entry into mitosis and is essential to maintain an efficient G2 DNA damage checkpoint. Monoubiquitination at Lys-492 by the BCR(KLHL22) ubiquitin ligase complex does not lead to degradation: it promotes PLK1 dissociation from phosphoreceptor proteins and subsequent removal from kinetochores, allowing silencing of the spindle assembly checkpoint (SAC) and chromosome segregation.

The protein resides in the nucleus. Its subcellular location is the chromosome. It is found in the centromere. It localises to the kinetochore. The protein localises to the cytoplasm. The protein resides in the cytoskeleton. Its subcellular location is the microtubule organizing center. It is found in the centrosome. It localises to the spindle. The protein localises to the midbody. The catalysed reaction is L-seryl-[protein] + ATP = O-phospho-L-seryl-[protein] + ADP + H(+). It carries out the reaction L-threonyl-[protein] + ATP = O-phospho-L-threonyl-[protein] + ADP + H(+). Activated by phosphorylation of Thr-210 by AURKA; phosphorylation by AURKA is enhanced by BORA. Once activated, activity is stimulated by binding target proteins. Binding of target proteins has no effect on the non-activated kinase. Several inhibitors targeting PLKs are currently in development and are under investigation in a growing number of clinical trials, such as BI 2536, an ATP-competitive PLK1 inhibitor or BI 6727, a dihydropteridinone that specifically inhibits the catalytic activity of PLK1. Its function is as follows. Serine/threonine-protein kinase that performs several important functions throughout M phase of the cell cycle, including the regulation of centrosome maturation and spindle assembly, the removal of cohesins from chromosome arms, the inactivation of anaphase-promoting complex/cyclosome (APC/C) inhibitors, and the regulation of mitotic exit and cytokinesis. Polo-like kinase proteins act by binding and phosphorylating proteins that are already phosphorylated on a specific motif recognized by the POLO box domains. Phosphorylates BORA, BUB1B/BUBR1, CCNB1, CDC25C, CEP55, ECT2, ERCC6L, FBXO5/EMI1, FOXM1, KIF20A/MKLP2, CENPU, NEDD1, NINL, NPM1, NUDC, PKMYT1/MYT1, KIZ, PPP1R12A/MYPT1, PRC1, RACGAP1/CYK4, RHNO1, SGO1, STAG2/SA2, TEX14, TOPORS, p73/TP73, TPT1, WEE1 and HNRNPU. Plays a key role in centrosome functions and the assembly of bipolar spindles by phosphorylating KIZ, NEDD1 and NINL. NEDD1 phosphorylation promotes subsequent targeting of the gamma-tubulin ring complex (gTuRC) to the centrosome, an important step for spindle formation. Phosphorylation of NINL component of the centrosome leads to NINL dissociation from other centrosomal proteins. Involved in mitosis exit and cytokinesis by phosphorylating CEP55, ECT2, KIF20A/MKLP2, CENPU, PRC1 and RACGAP1. Recruited at the central spindle by phosphorylating and docking PRC1 and KIF20A/MKLP2; creates its own docking sites on PRC1 and KIF20A/MKLP2 by mediating phosphorylation of sites subsequently recognized by the POLO box domains. Phosphorylates RACGAP1, thereby creating a docking site for the Rho GTP exchange factor ECT2 that is essential for the cleavage furrow formation. Promotes the central spindle recruitment of ECT2. Plays a central role in G2/M transition of mitotic cell cycle by phosphorylating CCNB1, CDC25C, FOXM1, CENPU, PKMYT1/MYT1, PPP1R12A/MYPT1 and WEE1. Part of a regulatory circuit that promotes the activation of CDK1 by phosphorylating the positive regulator CDC25C and inhibiting the negative regulators WEE1 and PKMYT1/MYT1. Also acts by mediating phosphorylation of cyclin-B1 (CCNB1) on centrosomes in prophase. Phosphorylates FOXM1, a key mitotic transcription regulator, leading to enhance FOXM1 transcriptional activity. Involved in kinetochore functions and sister chromatid cohesion by phosphorylating BUB1B/BUBR1, FBXO5/EMI1 and STAG2/SA2. PLK1 is high on non-attached kinetochores suggesting a role of PLK1 in kinetochore attachment or in spindle assembly checkpoint (SAC) regulation. Required for kinetochore localization of BUB1B. Regulates the dissociation of cohesin from chromosomes by phosphorylating cohesin subunits such as STAG2/SA2. Phosphorylates SGO1: required for spindle pole localization of isoform 3 of SGO1 and plays a role in regulating its centriole cohesion function. Mediates phosphorylation of FBXO5/EMI1, a negative regulator of the APC/C complex during prophase, leading to FBXO5/EMI1 ubiquitination and degradation by the proteasome. Acts as a negative regulator of p53 family members: phosphorylates TOPORS, leading to inhibit the sumoylation of p53/TP53 and simultaneously enhance the ubiquitination and subsequent degradation of p53/TP53. Phosphorylates the transactivation domain of the transcription factor p73/TP73, leading to inhibit p73/TP73-mediated transcriptional activation and pro-apoptotic functions. Phosphorylates BORA, and thereby promotes the degradation of BORA. Contributes to the regulation of AURKA function. Also required for recovery after DNA damage checkpoint and entry into mitosis. Phosphorylates MISP, leading to stabilization of cortical and astral microtubule attachments required for proper spindle positioning. Together with MEIKIN, acts as a regulator of kinetochore function during meiosis I: required both for mono-orientation of kinetochores on sister chromosomes and protection of centromeric cohesin from separase-mediated cleavage. Phosphorylates CEP68 and is required for its degradation. Regulates nuclear envelope breakdown during prophase by phosphorylating DCTN1 resulting in its localization in the nuclear envelope. Phosphorylates the heat shock transcription factor HSF1, promoting HSF1 nuclear translocation upon heat shock. Phosphorylates HSF1 also in the early mitotic period; this phosphorylation regulates HSF1 localization to the spindle pole, the recruitment of the SCF(BTRC) ubiquitin ligase complex induicing HSF1 degradation, and hence mitotic progression. Regulates mitotic progression by phosphorylating RIOK2. Through the phosphorylation of DZIP1 regulates the localization during mitosis of the BBSome, a ciliary protein complex involved in cilium biogenesis. Regulates DNA repair during mitosis by mediating phosphorylation of POLQ and RHNO1, thereby promoting POLQ recruitment to DNA damage sites. Phosphorylates ATXN10 which may play a role in the regulation of cytokinesis and may stimulate the proteasome-mediated degradation of ATXN10. This chain is Serine/threonine-protein kinase PLK1 (Plk1), found in Rattus norvegicus (Rat).